The primary structure comprises 181 residues: Coatomer subunit zeta-3 (181 aa).

Belongs to the adaptor complexes small subunit family. As to quaternary structure, oligomeric complex that consists of at least the alpha, beta, beta', gamma, delta, epsilon and zeta subunits.

It is found in the cytoplasm. Its subcellular location is the golgi apparatus membrane. The protein localises to the cytoplasmic vesicle. It localises to the COPI-coated vesicle membrane. The coatomer is a cytosolic protein complex that binds to dilysine motifs and reversibly associates with Golgi non-clathrin-coated vesicles, which further mediate biosynthetic protein transport from the ER, via the Golgi up to the trans Golgi network. Coatomer complex is required for budding from Golgi membranes, and is essential for the retrograde Golgi-to-ER transport of dilysine-tagged proteins. The zeta subunit may be involved in regulating the coat assembly and, hence, the rate of biosynthetic protein transport due to its association-dissociation properties with the coatomer complex. This chain is Coatomer subunit zeta-3, found in Arabidopsis thaliana (Mouse-ear cress).